An 89-amino-acid chain; its full sequence is Acyl carrier protein MbtL (89 aa).

Positions 7 to 82 constitute a Carrier domain; sequence ESVSAALTEI…DLEAAIQAKV (76 aa). An O-(pantetheine 4'-phosphoryl)serine modification is found at Ser-42.

Post-translationally, 4'-phosphopantetheine is transferred from CoA to a specific serine of apo-ACP, leading to the activated holo-ACP form.

The protein resides in the cytoplasm. It functions in the pathway siderophore biosynthesis; mycobactin biosynthesis. Its function is as follows. Acyl carrier protein involved in the formation of acyl-S-ACP intermediates within the mycobactin biosynthesis process. The protein is Acyl carrier protein MbtL (mbtL) of Mycobacterium sp. (strain MCS).